Here is a 264-residue protein sequence, read N- to C-terminus: S-adenosylmethionine decarboxylase proenzyme (264 aa).

Ser-112 serves as the catalytic Schiff-base intermediate with substrate; via pyruvic acid. Ser-112 is subject to Pyruvic acid (Ser); by autocatalysis. His-117 acts as the Proton acceptor; for processing activity in catalysis. Cys-140 acts as the Proton donor; for catalytic activity in catalysis.

The protein belongs to the prokaryotic AdoMetDC family. Type 2 subfamily. As to quaternary structure, heterooctamer of four alpha and four beta chains arranged as a tetramer of alpha/beta heterodimers. Pyruvate is required as a cofactor. Post-translationally, is synthesized initially as an inactive proenzyme. Formation of the active enzyme involves a self-maturation process in which the active site pyruvoyl group is generated from an internal serine residue via an autocatalytic post-translational modification. Two non-identical subunits are generated from the proenzyme in this reaction, and the pyruvate is formed at the N-terminus of the alpha chain, which is derived from the carboxyl end of the proenzyme. The post-translation cleavage follows an unusual pathway, termed non-hydrolytic serinolysis, in which the side chain hydroxyl group of the serine supplies its oxygen atom to form the C-terminus of the beta chain, while the remainder of the serine residue undergoes an oxidative deamination to produce ammonia and the pyruvoyl group blocking the N-terminus of the alpha chain.

It carries out the reaction S-adenosyl-L-methionine + H(+) = S-adenosyl 3-(methylsulfanyl)propylamine + CO2. Its pathway is amine and polyamine biosynthesis; S-adenosylmethioninamine biosynthesis; S-adenosylmethioninamine from S-adenosyl-L-methionine: step 1/1. Functionally, catalyzes the decarboxylation of S-adenosylmethionine to S-adenosylmethioninamine (dcAdoMet), the propylamine donor required for the synthesis of the polyamines spermine and spermidine from the diamine putrescine. This is S-adenosylmethionine decarboxylase proenzyme from Yersinia enterocolitica serotype O:8 / biotype 1B (strain NCTC 13174 / 8081).